The sequence spans 879 residues: MERMGLNEIREEYLKFFESKAHLRLPSFSLVPKNDKSLLLINAGMAPLKPYFTGLQVPPNKRVTTCQKCVRTGDIENVGKTSRHGTFFEMMGNFSFGDYFKEEVIPWAWEFTTEVLKLPKNKLYVTIYEDDDEALDIWVNKTDVDPKRIFRLGKEDNFWEHGLGPCGPCSEIHFNRGAGEVKTSEEFVKASDEDKIVEFWNLVFTQFDKDEEGNYNKLANPNIDTGMGLERMATIMQNVDTIFEVDTIKAVLDKVCKLSGANYKEDRVKDISIRIITDHIRSITFMISDGILPSNEGRGYVLRRLLRRAARHGKTLGINNTFLHNLTDIVIENCYKNYPELEEKREYIKKIIKLEEERFDETIDAGMQILNDYIKEVKNNNYKVLSGDKAFKLYDTYGFPVELTEEILEEEGISIDKEGFNKEMKEQRERARSAREETNYMGAEDTILNKIDLNINTDFEGYDKLEVKSKVAVIIKDEEFKNEIEKGNEGVIVTYNTPFYAEMGGQIGDTGIIYNDNFKAEVIDCKKNISGKILHFVKILDGKVALEDQVILKVNEGRRNNIRKNHTATHILHAALIKVVGDHVQQSGSYVDDERLRFDFSHFEAVSEDELKEVEKIVNKEIMKANAVNTKVMNIEEAKQQGAIALFDNKYKDDVRVVSVGDFSKELCGGTHVSNSGQIGMFKVVSEAGVAAGIRRIEAVTAFKAMEYVDHKNNILKEAAQILKCNEKELLNKLNHQVLEMKEKEKEIEALKLKLASGAEDEILNNIKEIKGVKVASAAVKDIDGNALRDLGDKIRDNMQSGVVVLGSNYKGKVLFVAMATKDTVAKGVHCGKIIKEVASIAGGGGGGRPDMAQAGGKDPNKLEDAIKTVETVVESLVK.

Zn(2+) is bound by residues histidine 566, histidine 570, cysteine 668, and histidine 672.

This sequence belongs to the class-II aminoacyl-tRNA synthetase family. Requires Zn(2+) as cofactor.

It is found in the cytoplasm. It catalyses the reaction tRNA(Ala) + L-alanine + ATP = L-alanyl-tRNA(Ala) + AMP + diphosphate. Its function is as follows. Catalyzes the attachment of alanine to tRNA(Ala) in a two-step reaction: alanine is first activated by ATP to form Ala-AMP and then transferred to the acceptor end of tRNA(Ala). Also edits incorrectly charged Ser-tRNA(Ala) and Gly-tRNA(Ala) via its editing domain. This is Alanine--tRNA ligase from Clostridium botulinum (strain Loch Maree / Type A3).